Here is a 527-residue protein sequence, read N- to C-terminus: Zinc finger imprinted 2 (527 aa).

Over residues 1 to 16 (MYQPEDDNNSDVTSDD) the composition is skewed to acidic residues. The segment at 1–104 (MYQPEDDNNS…SRSQDAESYQ (104 aa)) is disordered. Basic and acidic residues-rich tracts occupy residues 17-26 (DMTRNRRESS), 35-56 (SGDRDWDRRGRSRDMEPRDRWS), and 80-99 (FEMDREDDRDSRAYESRSQD). Residues 176-246 (VTFEDVLVDF…ETDSRHTVIC (71 aa)) enclose the KRAB domain. A disordered region spans residues 247-322 (QGESHDDPLE…GICTSPQSAS (76 aa)). The segment covering 259 to 275 (QGNQEKLLTPITMNDPK) has biased composition (polar residues). The segment covering 297-307 (QSKDPLGKDPQ) has biased composition (basic and acidic residues). C2H2-type zinc fingers lie at residues 328-350 (NRCEFCKRTFSTQVALRRHERIH), 356-378 (YECKQCAEAFYLMPHLNRHQKTH), 412-434 (FECFQCGKAFLQNVHLLQHLKAH), 466-488 (CQCCDCGRVFSRNSYLIQHYRTH), and 494-516 (YQCQLCGKCFGRPSYLTQHYQLH).

The protein belongs to the krueppel C2H2-type zinc-finger protein family. Highest levels of expression in adult testis; modest levels in fetal kidney and brain.

Its subcellular location is the nucleus. Its function is as follows. May be involved in transcriptional regulation. The protein is Zinc finger imprinted 2 (ZIM2) of Homo sapiens (Human).